The sequence spans 306 residues: Olfactory receptor 8G17 (306 aa).

Topologically, residues Met-1–Phe-28 are extracellular. The N-linked (GlcNAc...) asparagine glycan is linked to Asn-5. Residues Leu-29–Ile-49 form a helical membrane-spanning segment. The Cytoplasmic segment spans residues Leu-50–His-56. The chain crosses the membrane as a helical span at residues Thr-57–Ile-77. The Extracellular segment spans residues Thr-78–Cys-97. Residues Ile-98–Met-118 form a helical membrane-spanning segment. Residues Ala-119–Ser-143 lie on the Cytoplasmic side of the membrane. A helical membrane pass occupies residues Leu-144–Phe-164. The Extracellular segment spans residues Arg-165–Asp-196. The chain crosses the membrane as a helical span at residues Leu-197 to Ser-217. Residues Tyr-218 to Lys-236 are Cytoplasmic-facing. Residues Ala-237–Phe-257 form a helical membrane-spanning segment. Topologically, residues Thr-258–Gly-271 are extracellular. The chain crosses the membrane as a helical span at residues Lys-272–Leu-292. At Arg-293–Glu-306 the chain is on the cytoplasmic side.

This sequence belongs to the G-protein coupled receptor 1 family.

Its subcellular location is the cell membrane. Odorant receptor. The chain is Olfactory receptor 8G17 from Mus musculus (Mouse).